Consider the following 2199-residue polypeptide: MPLKTARGASKYQFRKFNGNYNGKSKSNGRTFAKSTEEVGFNDPMKIVYKKNEIDRMMGFDSYEGGQPREAWLLNVHPTVIESTKGNSTLSAVDFYFIQDDGDTFRCTIPYSPYFYIAAREGKEALVDDYLKKKFVGLIKSTTRIFKEDLQLKNHIVGYQKLYIKLVFDNLNDLQAVRKSLMSAVKANSSQQDAVDAYTNLSSENLNGIIENAFEDPLNHVLDIREYDVPYHSRTLIDLNIRVGQWYTVSYHEGHVQISLLASRIERAEPTIMAFDIETTKLPLKFPDSSFDKIMMISYMIDGQGFLITNREIISQNIEDFHYTPREEFEGPFIIFNEPDEVGLLHRFFKHIRSAKPSVIVTYNGDFFDWPFVDARAAFHGLNLTEETGFFRDAEDEYKSSYCSHMDAFRWVKRDSYLPQGSQGLKAVTVSKLGYNPIELDPELMTPYASEKPQVLAQYSVSDAVATYFLYMKYVHPFIFSLCNIIPLNPDEVLRKGTGTLCETLLTVEACTKNIILPNKHVDASQKFFDGHLLASETYVGGHVESLESGVFRSDLPTNFNMDPKVYEELILQLDKALDFSLTVENNVNVDEIENYEEVRDSILKKLSDLRDRPKRSEKPRIYHLDVASMYPNIMITNRLQPDSVKDESFCATCDLNVPNKTCDRRMVWAWRGEYYPAKKGEYHMIYSALQSERFPGPTPFSPFRSFQELSPSEQAAMVQKRIADYSRKVYHRLYDNTVIERETIICQKENSFYIDTVKSFRDRRYDFKGLQKKWVKQLAAIKEKGGLAEIEEAKKMVVLYDSLQLAHKVILNSFYGYVMRKGSRWYSIEMAGITCLTGATIIQMARQIVERAGRPLELDTDGIWCILPESFPENFEFKKKSGGKVFISYPCVMLNHLVHEKFTNHQYSALKDPEKLVYETTSENSIFFEVDGPYRAMILPASTEEGKNLKKRYAVFNFDGSLAELKGFEVKRRGELKLIKDFQSQIFKVFLKGDSLEECYQEVAYVADTWLEILFTKGSNLTDDELIELISENRSMSKALSEYGSQKSTSITTARRLADFLGDQMTKDKGLACRFIISASPKGRPVAERAVPVAIFFAEESVKRHFLRLWLKDNGLYDVDIRDIIDWDYYLKRLGSVVQKLISIPAALQRISNPVTRFPLPDWLQKRVAVLNSKYQQKKIDSIFSLAPTNPSTINNTKVTDIEDLGSVTHKDKRIVARVTKRKLLQQSGNSEAPVSFEVKPVSFMDGYSNWLKYAKKKWKYQKQVKLRRRHLIGFQSRQFTNVLQSSAEVMFENLWHILQIRETDVPGILHAWVIIRNRLTSIRFIVNRKFFVCFKDETLPNVEIEGCLIEKSNAILPHGSTSDKLFLLEIPEKSYLTEKVSISMIFAHPSVSGIYETRIEPIERLILEMGSRKRFNNSVPGALGKGFEFGFESKMFTDPSDNDVSYLDGVEMNYLYAFHFSISNRFVFSLFMPHLKKVEAIIYDKLPGSDMSFPSISKIYEELRSKFDNLIKESSIEYPDTLSCNVIFSGNERKAYKLIDEKLLQYFSTKTKNSLLIIESSLPHILKANVKQIEELPYIMIPRLESNIQSLSWKQHIATKMIQHFLAIGSWLFHRIQLSRFSDIPLCNFESDDIQYSIDVVYSRKLKEHNIILWWNKGPTPDLGGIEKDSILQIASPKDPLEVNNPGAYSNACVDISLSNLALCSILNSALINDIEGIGDMAALNDNYMTAINDDLEEKLGIHDNIGLTHSLPVLKALVKTWWNEAASGNNLADLIIQHLARWISSSKSYLYSPLLSSHVEVIMRKTFLQLLSEIKRLGAHIIHASANKILIKTSKLIVQNAVTYSNYLLKSIKTLPLFHFLDLNVTEYWDYLLWMDSVNYGGKMVAANFSATNEEPQTVVSWHIKSHLPPIIQPEFQSWIVEFIEEVYKQKLEKSNTKVGFVRVKNNNADEDSEIVGSGILKSKLIHPLKRKVAQVRRCFQELQLDENTREDLKFPKLPGSFLNYTDGALELVKSICAVFELSHDLNLEVRFLKKSLLSLLQIQEFSTQAVFRYPSRRLSLDQIPCKQCGVHQDFDLCLHEHLWPTRDDMGTLVFSDGWSCSSCNLVYDRWVFEETLVDNLYHQLTLYQLQDLICSKCKTVKQWSLKERCSCSGEWVLQLSPTKFREMLNVYQSVADFYEFSILQNSVQSILSVLN.

Zn(2+) is bound by residues cysteine 2069, cysteine 2072, cysteine 2104, and cysteine 2107. A CysA-type zinc finger spans residues 2069–2107; sequence CKQCGVHQDFDLCLHEHLWPTRDDMGTLVFSDGWSCSSC. Cysteine 2138, cysteine 2141, cysteine 2153, and cysteine 2155 together coordinate [4Fe-4S] cluster. Positions 2138 to 2155 match the CysB motif motif; that stretch reads CSKCKTVKQWSLKERCSC.

This sequence belongs to the DNA polymerase type-B family. Heterotetramer. Consists of 4 subunits: pol2, dpb2, dpb3 and dpb4. It depends on [4Fe-4S] cluster as a cofactor.

It localises to the nucleus. The catalysed reaction is DNA(n) + a 2'-deoxyribonucleoside 5'-triphosphate = DNA(n+1) + diphosphate. Functionally, DNA polymerase II participates in chromosomal DNA replication. This is DNA polymerase epsilon catalytic subunit A (pol2) from Schizosaccharomyces pombe (strain 972 / ATCC 24843) (Fission yeast).